We begin with the raw amino-acid sequence, 379 residues long: MKQLEKLIIEAKILTEPEAEVERVMQVCNACRYCEGFCAVFPAMTQRLEFGKADINYLANLCHNCGACLHACQYAPPHEFAINVPKAMAEVRLETYQHYAQPAAFGALYRQAGVTVTLALVFSLILFLLLAMGLKGSLLHPPLAGDFYQIFPHNLLAWMFGSVFMLAIGLLMAGVIRFWREISPVGPRPAEIAEASHNALTLKYLDGGHGKGCNEADDAFTLMRRRFHHFTFYGFMLCFAATVVATGYHYFAGWEAPYPFFSVPVMLGTLGGIGLIVGPAGLLWLNLKRSSLHGDARQKPMDRGFILLLLLTSLTGIGLLAGRDTSWMGILLAIHLGVVMALFLTIPYGKFAHGFYRCASLLKWAIEKRRGKQAGVAGD.

8 residues coordinate [4Fe-4S] cluster: cysteine 28, cysteine 31, cysteine 34, cysteine 38, cysteine 62, cysteine 65, cysteine 68, and cysteine 72.

The sequence is that of Citrate utilization protein B (citB) from Escherichia coli.